The primary structure comprises 365 residues: IgG receptor FcRn large subunit p51 (365 aa).

An N-terminal signal peptide occupies residues 1–21 (MGMPLPWALSLLLVLLPQTWG). Residues 22–110 (SETRPPLMYH…KTLEKILNGT (89 aa)) are alpha-1. Residues 22–297 (SETRPPLMYH…VDLDSSARSS (276 aa)) lie on the Extracellular side of the membrane. N-linked (GlcNAc...) asparagine glycans are attached at residues N108, N125, N149, and N246. The interval 111–200 (YTLQGLLGCE…ERGRRNLEWK (90 aa)) is alpha-2. Cystine bridges form between C119-C182 and C221-C275. The alpha-3 stretch occupies residues 201–290 (EPPSMRLKAR…GLAQPLTVDL (90 aa)). One can recognise an Ig-like C1-type domain in the interval 202–289 (PPSMRLKARP…EGLAQPLTVD (88 aa)). The connecting peptide stretch occupies residues 291–297 (DSSARSS). The chain crosses the membrane as a helical span at residues 298 to 321 (VPVVGIVLGLLLVVVAIAGGVLLW). Residues 322–365 (GRMRSGLPAPWLSLSGDDSGDLLPGGNLPPEAEPQGANAFPATS) are Cytoplasmic-facing. Position 334 is a phosphoserine (S334). Residues 343 to 365 (LLPGGNLPPEAEPQGANAFPATS) form a disordered region.

This sequence belongs to the immunoglobulin superfamily. FcRn complex consists of two subunits: p51, and p14 which is equivalent to beta-2-microglobulin. It forms an MHC class I-like heterodimer. Interacts with albumin/ALB; this interaction regulates ALB homeostasis. As to expression, intestinal epithelium of suckling rodents. Expressed in neonatal intestine and fetal yolk sac.

It is found in the cell membrane. The protein resides in the endosome membrane. In terms of biological role, cell surface receptor that transfers passive humoral immunity from the mother to the newborn. Binds to the Fc region of monomeric immunoglobulin gamma and mediates its selective uptake from milk. IgG in the milk is bound at the apical surface of the intestinal epithelium. The resultant FcRn-IgG complexes are transcytosed across the intestinal epithelium and IgG is released from FcRn into blood or tissue fluids. Throughout life, contributes to effective humoral immunity by recycling IgG and extending its half-life in the circulation. Mechanistically, monomeric IgG binding to FcRn in acidic endosomes of endothelial and hematopoietic cells recycles IgG to the cell surface where it is released into the circulation. In addition of IgG, regulates homeostasis of the other most abundant circulating protein albumin/ALB. In Mus musculus (Mouse), this protein is IgG receptor FcRn large subunit p51 (Fcgrt).